The primary structure comprises 337 residues: D-alanine--D-alanine ligase (337 aa).

Positions 124-330 (KMWFSALGIP…FTEYLSLVIN (207 aa)) constitute an ATP-grasp domain. 154–209 (ALAQWGSIFVKAASQGSSVGCYKVDDSAKVAGVLKDAFGYAPYVIVEKTIKARELE) serves as a coordination point for ATP. Residues Asp-284, Glu-297, and Asn-299 each coordinate Mg(2+).

The protein belongs to the D-alanine--D-alanine ligase family. It depends on Mg(2+) as a cofactor. Mn(2+) serves as cofactor.

The protein resides in the cytoplasm. It carries out the reaction 2 D-alanine + ATP = D-alanyl-D-alanine + ADP + phosphate + H(+). Its pathway is cell wall biogenesis; peptidoglycan biosynthesis. Cell wall formation. This chain is D-alanine--D-alanine ligase, found in Shewanella baltica (strain OS185).